Reading from the N-terminus, the 945-residue chain is Isoleucine--tRNA ligase (945 aa).

Residues 66–76 (PYANGDIHLGH) carry the 'HIGH' region motif. An L-isoleucyl-5'-AMP-binding site is contributed by E581. The short motif at 622 to 626 (KMSKS) is the 'KMSKS' region element. K625 provides a ligand contact to ATP. 4 residues coordinate Zn(2+): C908, C911, C928, and C931.

It belongs to the class-I aminoacyl-tRNA synthetase family. IleS type 1 subfamily. In terms of assembly, monomer. Zn(2+) is required as a cofactor.

It is found in the cytoplasm. It catalyses the reaction tRNA(Ile) + L-isoleucine + ATP = L-isoleucyl-tRNA(Ile) + AMP + diphosphate. Its function is as follows. Catalyzes the attachment of isoleucine to tRNA(Ile). As IleRS can inadvertently accommodate and process structurally similar amino acids such as valine, to avoid such errors it has two additional distinct tRNA(Ile)-dependent editing activities. One activity is designated as 'pretransfer' editing and involves the hydrolysis of activated Val-AMP. The other activity is designated 'posttransfer' editing and involves deacylation of mischarged Val-tRNA(Ile). This chain is Isoleucine--tRNA ligase, found in Paraburkholderia phytofirmans (strain DSM 17436 / LMG 22146 / PsJN) (Burkholderia phytofirmans).